We begin with the raw amino-acid sequence, 450 residues long: Phosphoglucosamine mutase (450 aa).

The active-site Phosphoserine intermediate is S102. Residues S102, D243, D245, and D247 each contribute to the Mg(2+) site. S102 carries the phosphoserine modification.

It belongs to the phosphohexose mutase family. The cofactor is Mg(2+). In terms of processing, activated by phosphorylation.

It carries out the reaction alpha-D-glucosamine 1-phosphate = D-glucosamine 6-phosphate. Its function is as follows. Catalyzes the conversion of glucosamine-6-phosphate to glucosamine-1-phosphate. The polypeptide is Phosphoglucosamine mutase (Rhizobium rhizogenes (strain K84 / ATCC BAA-868) (Agrobacterium radiobacter)).